The chain runs to 98 residues: MSLVYVNVMIAFLISLLGLLMYRSHLMSSLLCLEGMMLSLFILGTIMILNIHFTLASMIPIILLVFAACEAAIGLSLLVMVSNTYGVDYVQNLNLLQC.

Helical transmembrane passes span 1-21 (MSLVYVNVMIAFLISLLGLLM), 29-49 (SLLCLEGMMLSLFILGTIMIL), and 61-81 (IILLVFAACEAAIGLSLLVMV).

Belongs to the complex I subunit 4L family. Core subunit of respiratory chain NADH dehydrogenase (Complex I) which is composed of 45 different subunits.

It is found in the mitochondrion inner membrane. The enzyme catalyses a ubiquinone + NADH + 5 H(+)(in) = a ubiquinol + NAD(+) + 4 H(+)(out). In terms of biological role, core subunit of the mitochondrial membrane respiratory chain NADH dehydrogenase (Complex I) which catalyzes electron transfer from NADH through the respiratory chain, using ubiquinone as an electron acceptor. Part of the enzyme membrane arm which is embedded in the lipid bilayer and involved in proton translocation. This chain is NADH-ubiquinone oxidoreductase chain 4L (MT-ND4L), found in Urotrichus talpoides (Japanese shrew mole).